The chain runs to 61 residues: Large ribosomal subunit protein uL30 (61 aa).

It belongs to the universal ribosomal protein uL30 family. In terms of assembly, part of the 50S ribosomal subunit.

The chain is Large ribosomal subunit protein uL30 from Neisseria gonorrhoeae (strain ATCC 700825 / FA 1090).